A 319-amino-acid chain; its full sequence is Cobalamin biosynthesis protein CbiB (319 aa).

5 helical membrane-spanning segments follow: residues 56–76 (VMWV…LALA), 82–102 (WFGW…RSLA), 153–173 (VDGI…LAMA), 204–224 (VANY…AGLC), and 296–316 (LMWV…CGLS).

The protein belongs to the CobD/CbiB family.

Its subcellular location is the cell membrane. Its pathway is cofactor biosynthesis; adenosylcobalamin biosynthesis. Its function is as follows. Converts cobyric acid to cobinamide by the addition of aminopropanol on the F carboxylic group. However, the true cosubstrate could be (R)-1-amino-2-propanol O-2-phosphate, leading to cobinamide phosphate. This is Cobalamin biosynthesis protein CbiB from Salmonella paratyphi B (strain ATCC BAA-1250 / SPB7).